Here is a 69-residue protein sequence, read N- to C-terminus: Putative membrane protein insertion efficiency factor (69 aa).

This sequence belongs to the UPF0161 family.

It localises to the cell inner membrane. In terms of biological role, could be involved in insertion of integral membrane proteins into the membrane. The sequence is that of Putative membrane protein insertion efficiency factor from Azoarcus sp. (strain BH72).